The chain runs to 1232 residues: Anion exchange protein 3 (1232 aa).

Residues 1–11 show a composition bias toward pro residues; sequence MANGVIPPPGG. Disordered stretches follow at residues 1 to 316 and 429 to 498; these read MANG…KLDR and NDDK…GDGH. The Cytoplasmic portion of the chain corresponds to 1–708; the sequence is MANGVIPPPG…DLRDALHSQC (708 aa). Basic and acidic residues predominate over residues 58–75; that stretch reads DPEKPSRSYSERDFEFHR. Basic residues-rich tracts occupy residues 76–97 and 104–113; these read HTSH…KLRR and RHTRRKRKKE. The span at 134–152 shows a compositional bias: acidic residues; sequence VDEEEEEEEEEEGESEAEP. A phosphoserine mark is found at Ser-167, Ser-170, Ser-175, and Ser-198. A compositionally biased stretch (low complexity) spans 200–215; that stretch reads QHSSSSPSPRARASRL. A compositionally biased stretch (basic and acidic residues) spans 267–279; sequence DDMKSHRLEDNPG. A compositionally biased stretch (basic residues) spans 280–289; it reads VRRHLVKKPS. Arg-295 bears the Omega-N-methylarginine mark. Residues 305 to 316 are compositionally biased toward basic residues; sequence LRRKKKKKKLDR. The span at 440 to 450 shows a compositional bias: polar residues; sequence NPSSSSMNSVL. Residues 481-498 are compositionally biased toward basic and acidic residues; that stretch reads HDPDAKEKPLHMPGGDGH. 5 helical membrane-spanning segments follow: residues 709-731, 737-774, 794-816, 826-847, and 893-910; these read VAAV…GLLG, LMGV…LLVF, VWVG…SFLV, IFAF…YKVF, and ALLS…AFFL. The membrane (anion exchange) stretch occupies residues 709 to 1232; the sequence is VAAVLFIYFA…DEYNELHMPV (524 aa). The Cytoplasmic segment spans residues 911 to 925; that stretch reads RKFRNSRFLGGKARR. The next 5 membrane-spanning stretches (helical) occupy residues 926-946, 980-1002, 1028-1049, 1083-1128, and 1155-1191; these read IIGD…DYSI, PFPP…LIFM, LLLI…LTAA, VTGV…IQLS, and MHLF…TVPL. Cys-1165 is lipidated: S-palmitoyl cysteine.

Belongs to the anion exchanger (TC 2.A.31) family. As to expression, expressed in the heart.

It is found in the cell membrane. It carries out the reaction hydrogencarbonate(in) + chloride(out) = hydrogencarbonate(out) + chloride(in). In terms of biological role, sodium-independent anion exchanger which mediates the electroneutral exchange of chloride for bicarbonate ions across the cell membrane. May be involved in the regulation of intracellular pH, and the modulation of cardiac action potential. The protein is Anion exchange protein 3 (SLC4A3) of Homo sapiens (Human).